The following is a 35-amino-acid chain: Sperm protamine alpha isoform 1 (35 aa).

The disordered stretch occupies residues 1–35 (MPRRRRRASRPVRRRRRARRSTAVRRRRRVVRRRR). 2 positions are modified to phosphoserine: serine 9 and serine 21.

Phosphorylated in immature sperm. Dephosphorylated in mature sperm allowing a stronger interaction with DNA. Gonads.

The protein resides in the nucleus. It is found in the chromosome. Its function is as follows. Protamines substitute for histones in the chromatin of sperm during the haploid phase of spermatogenesis. They compact sperm DNA into a highly condensed, stable and inactive complex. The protein is Sperm protamine alpha isoform 1 of Scomber scombrus (Atlantic mackerel).